Reading from the N-terminus, the 186-residue chain is Elongation factor P (186 aa).

It belongs to the elongation factor P family.

It is found in the cytoplasm. It participates in protein biosynthesis; polypeptide chain elongation. In terms of biological role, involved in peptide bond synthesis. Stimulates efficient translation and peptide-bond synthesis on native or reconstituted 70S ribosomes in vitro. Probably functions indirectly by altering the affinity of the ribosome for aminoacyl-tRNA, thus increasing their reactivity as acceptors for peptidyl transferase. The chain is Elongation factor P from Streptococcus gordonii (strain Challis / ATCC 35105 / BCRC 15272 / CH1 / DL1 / V288).